We begin with the raw amino-acid sequence, 232 residues long: Flagellar L-ring protein (232 aa).

Residues 1–21 (MQKNAAHTYAISSLLVLSLTG) form the signal peptide. C22 carries the N-palmitoyl cysteine lipid modification. The S-diacylglycerol cysteine moiety is linked to residue C22.

It belongs to the FlgH family. In terms of assembly, the basal body constitutes a major portion of the flagellar organelle and consists of four rings (L,P,S, and M) mounted on a central rod.

It is found in the cell outer membrane. It localises to the bacterial flagellum basal body. In terms of biological role, assembles around the rod to form the L-ring and probably protects the motor/basal body from shearing forces during rotation. In Shigella dysenteriae serotype 1 (strain Sd197), this protein is Flagellar L-ring protein.